The sequence spans 166 residues: NAD(P)H-quinone oxidoreductase subunit I, chloroplastic (166 aa).

4Fe-4S ferredoxin-type domains are found at residues glycine 55–lysine 84 and leucine 95–glutamate 124. Cysteine 64, cysteine 67, cysteine 70, cysteine 74, cysteine 104, cysteine 107, cysteine 110, and cysteine 114 together coordinate [4Fe-4S] cluster.

The protein belongs to the complex I 23 kDa subunit family. As to quaternary structure, NDH is composed of at least 16 different subunits, 5 of which are encoded in the nucleus. It depends on [4Fe-4S] cluster as a cofactor.

It is found in the plastid. The protein localises to the chloroplast thylakoid membrane. The enzyme catalyses a plastoquinone + NADH + (n+1) H(+)(in) = a plastoquinol + NAD(+) + n H(+)(out). It carries out the reaction a plastoquinone + NADPH + (n+1) H(+)(in) = a plastoquinol + NADP(+) + n H(+)(out). Functionally, NDH shuttles electrons from NAD(P)H:plastoquinone, via FMN and iron-sulfur (Fe-S) centers, to quinones in the photosynthetic chain and possibly in a chloroplast respiratory chain. The immediate electron acceptor for the enzyme in this species is believed to be plastoquinone. Couples the redox reaction to proton translocation, and thus conserves the redox energy in a proton gradient. The chain is NAD(P)H-quinone oxidoreductase subunit I, chloroplastic from Chaetymenia peduncularis (Daisy).